Consider the following 276-residue polypeptide: Formamidopyrimidine-DNA glycosylase (276 aa).

P2 acts as the Schiff-base intermediate with DNA in catalysis. E3 serves as the catalytic Proton donor. Catalysis depends on K59, which acts as the Proton donor; for beta-elimination activity. Residues H92, R111, and K155 each contribute to the DNA site. An FPG-type zinc finger spans residues 239-273 (AVYGQTGAPCPRCGTAIEKIKVGGRGTHFCPTCQQ). The active-site Proton donor; for delta-elimination activity is R263.

This sequence belongs to the FPG family. As to quaternary structure, monomer. Requires Zn(2+) as cofactor.

The catalysed reaction is Hydrolysis of DNA containing ring-opened 7-methylguanine residues, releasing 2,6-diamino-4-hydroxy-5-(N-methyl)formamidopyrimidine.. It carries out the reaction 2'-deoxyribonucleotide-(2'-deoxyribose 5'-phosphate)-2'-deoxyribonucleotide-DNA = a 3'-end 2'-deoxyribonucleotide-(2,3-dehydro-2,3-deoxyribose 5'-phosphate)-DNA + a 5'-end 5'-phospho-2'-deoxyribonucleoside-DNA + H(+). Its function is as follows. Involved in base excision repair of DNA damaged by oxidation or by mutagenic agents. Acts as a DNA glycosylase that recognizes and removes damaged bases. Has a preference for oxidized purines, such as 7,8-dihydro-8-oxoguanine (8-oxoG). Has AP (apurinic/apyrimidinic) lyase activity and introduces nicks in the DNA strand. Cleaves the DNA backbone by beta-delta elimination to generate a single-strand break at the site of the removed base with both 3'- and 5'-phosphates. This Exiguobacterium sibiricum (strain DSM 17290 / CCUG 55495 / CIP 109462 / JCM 13490 / 255-15) protein is Formamidopyrimidine-DNA glycosylase.